A 668-amino-acid polypeptide reads, in one-letter code: Probable serine/threonine-protein kinase abkB (668 aa).

Disordered regions lie at residues 88–111 (YTNI…KTTA) and 132–162 (EVEE…DDNK). Polar residues predominate over residues 91–105 (IGGTSPNRQSVPENS). The stretch at 131–163 (KEVEEEIIDKNERGKEQEQENKQQKEQKDDNKS) forms a coiled coil. The span at 138–162 (IDKNERGKEQEQENKQQKEQKDDNK) shows a compositional bias: basic and acidic residues. The region spanning 314–668 (DFERLPINSA…EIPSTYHHHH (355 aa)) is the Protein kinase domain. ATP is bound by residues 320-328 (INSASLAQV) and lysine 346. Catalysis depends on aspartate 478, which acts as the Proton acceptor.

Belongs to the protein kinase superfamily. ADCK protein kinase family.

In Dictyostelium discoideum (Social amoeba), this protein is Probable serine/threonine-protein kinase abkB (abkB).